The following is a 169-amino-acid chain: Protein kinase-interacting protein PIKP1 (169 aa).

In terms of assembly, interacts with protein kinase PK1.

Functionally, plays a role in the stimulation of the viral kinase PK1 function in very late transcription and in expression of genes required for budded virus production. The polypeptide is Protein kinase-interacting protein PIKP1 (AC24) (Lepidoptera (butterflies and moths)).